Reading from the N-terminus, the 272-residue chain is Phosphate import ATP-binding protein PstB (272 aa).

In terms of domain architecture, ABC transporter spans 18 to 257 (VSIQNATISY…FNDTDKIFNA (240 aa)). 50–57 (GPSGCGKS) contributes to the ATP binding site.

This sequence belongs to the ABC transporter superfamily. Phosphate importer (TC 3.A.1.7) family. The complex is composed of two ATP-binding proteins (PstB), two transmembrane proteins (PstC and PstA) and a solute-binding protein (PstS).

The protein localises to the cell inner membrane. The enzyme catalyses phosphate(out) + ATP + H2O = ADP + 2 phosphate(in) + H(+). Part of the ABC transporter complex PstSACB involved in phosphate import. Responsible for energy coupling to the transport system. This is Phosphate import ATP-binding protein PstB from Synechococcus sp. (strain CC9311).